The sequence spans 884 residues: Alanine--tRNA ligase (884 aa).

Zn(2+)-binding residues include His-565, His-569, Cys-674, and His-678.

This sequence belongs to the class-II aminoacyl-tRNA synthetase family. Requires Zn(2+) as cofactor.

Its subcellular location is the cytoplasm. The catalysed reaction is tRNA(Ala) + L-alanine + ATP = L-alanyl-tRNA(Ala) + AMP + diphosphate. In terms of biological role, catalyzes the attachment of alanine to tRNA(Ala) in a two-step reaction: alanine is first activated by ATP to form Ala-AMP and then transferred to the acceptor end of tRNA(Ala). Also edits incorrectly charged Ser-tRNA(Ala) and Gly-tRNA(Ala) via its editing domain. In Xanthobacter autotrophicus (strain ATCC BAA-1158 / Py2), this protein is Alanine--tRNA ligase.